We begin with the raw amino-acid sequence, 263 residues long: Interleukin-33 (263 aa).

The segment covering 1–17 has biased composition (polar residues); it reads MKYSTTKIPPAKMNSSA. The tract at residues 1 to 28 is disordered; it reads MKYSTTKIPPAKMNSSADKALVKSPKLR. The tract at residues 1–65 is homeodomain-like HTH domain; sequence MKYSTTKIPP…CYFRKEITKR (65 aa). The interval 62–103 is interaction with RELA; the sequence is ITKRYSPRTAEKCRKQCLVFTACHQQLNKDFTSDVPMLQKCF.

The protein belongs to the IL-1 family. Highly divergent. In terms of assembly, forms a 1:1:1 heterotrimeric complex with its primary high-affinity receptor IL1RL1 and the coreceptor IL1RAP. Interacts with cargo receptor TMED10; the interaction mediates the translocation from the cytoplasm into the ERGIC (endoplasmic reticulum-Golgi intermediate compartment) and thereby secretion. In terms of processing, the full-length protein can be released from cells and is able to signal via the IL1RL1/ST2 receptor. However, proteolytic processing by CELA1, CSTG/cathepsin G and ELANE/neutrophil elastase produces C-terminal peptides that are more active than the unprocessed full-length protein. May also be proteolytically processed by calpains. Proteolytic cleavage mediated by apoptotic caspases including CASP3 and CASP7 results in IL33 inactivation. In vitro proteolytic cleavage by CASP1 was reported but could not be confirmed in vivo suggesting that IL33 is probably not a direct substrate for that caspase. As to expression, expressed in cultured umbilical artery smooth muscle cells after stimulation with IL1A and IL1B, and to a lesser extent with IFNG. Expressed in vasospastic cerebral arteries after subarachnoid hemorrhage.

The protein localises to the nucleus. Its subcellular location is the chromosome. The protein resides in the cytoplasm. It is found in the cytoplasmic vesicle. It localises to the secretory vesicle. The protein localises to the secreted. Functionally, cytokine that binds to and signals through the IL1RL1/ST2 receptor which in turn activates NF-kappa-B and MAPK signaling pathways in target cells. Involved in the maturation of Th2 cells inducing the secretion of T-helper type 2-associated cytokines. Also involved in activation of mast cells, basophils, eosinophils and natural killer cells. Acts as a chemoattractant for Th2 cells, and may function as an 'alarmin', that amplifies immune responses during tissue injury. Induces rapid UCP2-dependent mitochondrial rewiring that attenuates the generation of reactive oxygen species and preserves the integrity of Krebs cycle required for persistent production of itaconate and subsequent GATA3-dependent differentiation of inflammation-resolving alternatively activated macrophages. Its function is as follows. In quiescent endothelia the uncleaved form is constitutively and abundantly expressed, and acts as a chromatin-associated nuclear factor with transcriptional repressor properties, it may sequester nuclear NF-kappaB/RELA, lowering expression of its targets. This form is rapidely lost upon angiogenic or pro-inflammatory activation. The polypeptide is Interleukin-33 (IL33) (Canis lupus familiaris (Dog)).